The following is a 30-amino-acid chain: Cliotide T19 (30 aa).

The cyclopeptide (Gly-Asn) cross-link spans 1–30 (GSVIKCGESCLLGKCYTPGCTCSRPICKKN). 3 cysteine pairs are disulfide-bonded: Cys6–Cys20, Cys10–Cys22, and Cys15–Cys27.

In terms of processing, contains 3 disulfide bonds. Post-translationally, this is a cyclic peptide. In terms of tissue distribution, expressed in root nodules but not in seed.

Functionally, probably participates in a plant defense mechanism. Active against Gram-negative bacterium E.coli ATCC 700926 (MIC=0.6 uM) under low-salt conditions. Not active against Gram-positive bacterium S.aureus ATCC 12600 up to a concentration of 100 uM under low-salt conditions. Exhibits immunomodulatory activity but no cytotoxicity in vitro. This Clitoria ternatea (Butterfly pea) protein is Cliotide T19.